The following is a 100-amino-acid chain: Urease subunit gamma (100 aa).

This sequence belongs to the urease gamma subunit family. In terms of assembly, heterotrimer of UreA (gamma), UreB (beta) and UreC (alpha) subunits. Three heterotrimers associate to form the active enzyme.

It localises to the cytoplasm. It catalyses the reaction urea + 2 H2O + H(+) = hydrogencarbonate + 2 NH4(+). It functions in the pathway nitrogen metabolism; urea degradation; CO(2) and NH(3) from urea (urease route): step 1/1. This is Urease subunit gamma from Mycobacterium ulcerans (strain Agy99).